The following is a 165-amino-acid chain: MSRNGNFIDKTFSVVANILLQIIPTTSGEKEAFTYYRDGMSAQSEGNYAEALQNYYEAMRLEIDPYDRSYILYNIGLIHTSNGEHTKALEYYFRALERNPFLPQAFNNMAVICHYRGEQAIRQGDSEIAEAWFDQAAEYWKQALTLTPGNYIEAHNWLKITGRFE.

TPR repeat units follow at residues 32 to 65 (AFTYYRDGMSAQSEGNYAEALQNYYEAMRLEIDP), 69 to 102 (SYILYNIGLIHTSNGEHTKALEYYFRALERNPFL), and 117 to 150 (GEQAIRQGDSEIAEAWFDQAAEYWKQALTLTPGN).

The protein belongs to the Ycf3 family.

It localises to the plastid. The protein localises to the chloroplast thylakoid membrane. Essential for the assembly of the photosystem I (PSI) complex. May act as a chaperone-like factor to guide the assembly of the PSI subunits. This is Photosystem I assembly protein Ycf3 from Spinacia oleracea (Spinach).